The sequence spans 248 residues: Proteasome subunit alpha type-7 (248 aa).

Ser130 is a glycosylation site (O-linked (GlcNAc) serine). The residue at position 153 (Tyr153) is a Phosphotyrosine; by ABL1 and ABL2. Lys227 is modified (N6-acetyllysine).

It belongs to the peptidase T1A family. The 26S proteasome consists of a 20S proteasome core and two 19S regulatory subunits. The 20S proteasome core is a barrel-shaped complex made of 28 subunits that are arranged in four stacked rings. The two outer rings are each formed by seven alpha subunits, and the two inner rings are formed by seven beta subunits. The proteolytic activity is exerted by three beta-subunits PSMB5, PSMB6 and PSMB7. PSMA7 interacts directly with the PSMG1-PSMG2 heterodimer which promotes 20S proteasome assembly. Interacts with HIF1A. Interacts with RAB7A. Interacts with PRKN. Interacts with ABL1 and ABL2. Interacts with EMAP2. Interacts with MAVS. Phosphorylation by ABL1 or ABL2 leads to an inhibition of proteasomal activity and cell cycle transition blocks. Detected in liver (at protein level).

Its subcellular location is the cytoplasm. The protein resides in the nucleus. Functionally, component of the 20S core proteasome complex involved in the proteolytic degradation of most intracellular proteins. This complex plays numerous essential roles within the cell by associating with different regulatory particles. Associated with two 19S regulatory particles, forms the 26S proteasome and thus participates in the ATP-dependent degradation of ubiquitinated proteins. The 26S proteasome plays a key role in the maintenance of protein homeostasis by removing misfolded or damaged proteins that could impair cellular functions, and by removing proteins whose functions are no longer required. Associated with the PA200 or PA28, the 20S proteasome mediates ubiquitin-independent protein degradation. This type of proteolysis is required in several pathways including spermatogenesis (20S-PA200 complex) or generation of a subset of MHC class I-presented antigenic peptides (20S-PA28 complex). In Mus musculus (Mouse), this protein is Proteasome subunit alpha type-7 (Psma7).